The following is a 438-amino-acid chain: Serine/threonine-protein kinase VIK (438 aa).

The segment at 1-31 (MSSDSPAAGDGGEQAAAGTSVPSPSYDKQKE) is disordered. 3 ANK repeats span residues 36–65 (SRTSLILWHAHQNDAAAVRKLLEEDPTLVH), 70–99 (DKRTPLHVASLHGWIDVVKCLLEFGADVNA), and 103–133 (WKNTPLADAEGARKQKMIELLKSHGGLSYGQ). Residues 162–427 (FSNAAMIGKG…KRLEKIKETL (266 aa)) enclose the Protein kinase domain. Residues 168–176 (IGKGSFGEI) and K189 each bind ATP. D285 functions as the Proton acceptor in the catalytic mechanism.

This sequence belongs to the protein kinase superfamily. Ser/Thr protein kinase family. As to quaternary structure, interacts with BRL2. Binds to MSSP1/TMT1 at the tonoplast. In terms of processing, phosphorylated. As to expression, restricted to mature vascular cells. Mostly expressed in mature leaves and seeds, and, to a lower level, in seedlings, young leaves, flowers and siliques.

It is found in the vacuole. The catalysed reaction is L-seryl-[protein] + ATP = O-phospho-L-seryl-[protein] + ADP + H(+). It carries out the reaction L-threonyl-[protein] + ATP = O-phospho-L-threonyl-[protein] + ADP + H(+). Serine/threonine protein kinase which may function as an adapter protein for BRL2. Required during vascular development for the establishment of vein pattern in foliar organs. Mediates MSSP1/TMT1 phosphorylation and activation to enhance its carrier activity and consequently vacuolar sugar accumulation, particularly in response to cold. The protein is Serine/threonine-protein kinase VIK of Arabidopsis thaliana (Mouse-ear cress).